Reading from the N-terminus, the 835-residue chain is uncharacterized protein (835 aa).

Disordered stretches follow at residues 1 to 38 (MKTS…VGSR), 317 to 477 (DFDL…QSGR), 489 to 668 (SLSK…IKRR), 721 to 750 (DLEN…VSSF), and 810 to 835 (QEQQ…ELMF). Low complexity-rich tracts occupy residues 7-37 (STVP…TVGS), 328-351 (NNNN…TPTT), and 361-395 (SSTN…SGSS). Polar residues-rich tracts occupy residues 396–406 (IGNRTEVSSSI) and 415–424 (IIRSKSSLGT). The segment covering 432–442 (GGSGGGGGGGM) has biased composition (gly residues). Residues 449-477 (PISKTPTTMITKTASSSSPNLATSTQSGR) are compositionally biased toward polar residues. Low complexity predominate over residues 489 to 510 (SLSKQSSSSNLTRSLPPIIKSP). A compositionally biased stretch (pro residues) spans 511–521 (ISPPGPTPPAP). Positions 522–629 (TLTKSKSTPS…STTSSATKKS (108 aa)) are enriched in low complexity. Residues 631 to 640 (ITKTNPTDEQ) show a composition bias toward polar residues. Composition is skewed to low complexity over residues 641-664 (TTTP…STSS) and 724-750 (NNNN…VSSF). The segment covering 826-835 (ILDEDDELMF) has biased composition (acidic residues).

This is an uncharacterized protein from Dictyostelium discoideum (Social amoeba).